Consider the following 482-residue polypeptide: Alanine aminotransferase 2 (482 aa).

At Lys-299 the chain carries N6-(pyridoxal phosphate)lysine.

It belongs to the class-I pyridoxal-phosphate-dependent aminotransferase family. Alanine aminotransferase subfamily. As to quaternary structure, homodimer. Pyridoxal 5'-phosphate serves as cofactor.

The catalysed reaction is L-alanine + 2-oxoglutarate = pyruvate + L-glutamate. It participates in photosynthesis; C4 acid pathway. It functions in the pathway amino-acid degradation; L-alanine degradation via transaminase pathway; pyruvate from L-alanine: step 1/1. Functionally, transfer of C3 units between the cytosol of mesophyll and bundle sheath cells to maintain a nitrogen-carbon balance in the C4-dicarboxylic pathway. The protein is Alanine aminotransferase 2 of Hordeum vulgare (Barley).